The chain runs to 301 residues: J domain-containing protein 1 (301 aa).

The region spanning 58–150 is the J domain; sequence TPYDIFGIPK…KKKIVYDTTR (93 aa). The chain crosses the membrane as a helical span at residues 208 to 228; that stretch reads WTVIGIICGLAICIEGTALLA.

Belongs to the DnaJ family.

It localises to the mitochondrion membrane. Functionally, probable chaperone. The sequence is that of J domain-containing protein 1 (JID1) from Saccharomyces cerevisiae (strain ATCC 204508 / S288c) (Baker's yeast).